Reading from the N-terminus, the 165-residue chain is UPF0114 protein in repA1-repA2 intergenic region (165 aa).

The next 3 membrane-spanning stretches (helical) occupy residues 10 to 32 (YASR…LLTL), 53 to 75 (LILI…MVMF), and 136 to 155 (IMWC…GMAC).

It belongs to the UPF0114 family.

The protein localises to the cell membrane. This is UPF0114 protein in repA1-repA2 intergenic region from Buchnera aphidicola subsp. Geoica urticularia.